Reading from the N-terminus, the 318-residue chain is Putative S-adenosyl-L-methionine-dependent methyltransferase BCG_0781c (318 aa).

Residues Asp-135 and 164–165 (DL) each bind S-adenosyl-L-methionine.

The protein belongs to the UPF0677 family.

Its function is as follows. Exhibits S-adenosyl-L-methionine-dependent methyltransferase activity. This chain is Putative S-adenosyl-L-methionine-dependent methyltransferase BCG_0781c, found in Mycobacterium bovis (strain BCG / Pasteur 1173P2).